Consider the following 96-residue polypeptide: Co-chaperonin GroES (96 aa).

The protein belongs to the GroES chaperonin family. Heptamer of 7 subunits arranged in a ring. Interacts with the chaperonin GroEL.

The protein resides in the cytoplasm. Functionally, together with the chaperonin GroEL, plays an essential role in assisting protein folding. The GroEL-GroES system forms a nano-cage that allows encapsulation of the non-native substrate proteins and provides a physical environment optimized to promote and accelerate protein folding. GroES binds to the apical surface of the GroEL ring, thereby capping the opening of the GroEL channel. This Halorhodospira halophila (strain DSM 244 / SL1) (Ectothiorhodospira halophila (strain DSM 244 / SL1)) protein is Co-chaperonin GroES.